The primary structure comprises 492 residues: Lysine--tRNA ligase (492 aa).

Positions 395 and 402 each coordinate Mg(2+).

Belongs to the class-II aminoacyl-tRNA synthetase family. Homodimer. The cofactor is Mg(2+).

The protein resides in the cytoplasm. The catalysed reaction is tRNA(Lys) + L-lysine + ATP = L-lysyl-tRNA(Lys) + AMP + diphosphate. This Thermus thermophilus (strain ATCC BAA-163 / DSM 7039 / HB27) protein is Lysine--tRNA ligase.